The following is a 242-amino-acid chain: ATP synthase subunit a (242 aa).

A run of 5 helical transmembrane segments spans residues 21 to 41 (LASV…AIVC), 83 to 103 (AVTL…FAIV), 118 to 137 (ATVT…YYGI), 175 to 195 (LYGN…LFFE), and 198 to 218 (AWGW…SIFV).

This sequence belongs to the ATPase A chain family. In terms of assembly, F-type ATPases have 2 components, CF(1) - the catalytic core - and CF(0) - the membrane proton channel. CF(1) has five subunits: alpha(3), beta(3), gamma(1), delta(1), epsilon(1). CF(0) has three main subunits: a(1), b(2) and c(9-12). The alpha and beta chains form an alternating ring which encloses part of the gamma chain. CF(1) is attached to CF(0) by a central stalk formed by the gamma and epsilon chains, while a peripheral stalk is formed by the delta and b chains.

Its subcellular location is the cell membrane. Functionally, key component of the proton channel; it plays a direct role in the translocation of protons across the membrane. This Staphylococcus epidermidis (strain ATCC 35984 / DSM 28319 / BCRC 17069 / CCUG 31568 / BM 3577 / RP62A) protein is ATP synthase subunit a.